Here is a 22-residue protein sequence, read N- to C-terminus: Myofibril-bound serine protease (22 aa).

It belongs to the peptidase S1 family. In terms of tissue distribution, detected in muscle (at protein level).

It localises to the cytoplasm. Inhibited by the serine protease inhibitors, antipain, aprotinin, DFP, leupeptin, STI and TLCK, and by the cysteine proteinase inhibitors DTNB and to a lesser extent E-64. Not inhibited by the metalloproteinase inhibitor EDTA. Functionally, serine protease that selectively cleaves Arg-|-Xaa bonds. In Cyprinus carpio (Common carp), this protein is Myofibril-bound serine protease.